A 270-amino-acid chain; its full sequence is Thiamine thiazole synthase (270 aa).

Residues alanine 39, glutamate 58–glutamine 59, glycine 66, and leucine 130 contribute to the NAD(+) site. Cysteine 159 is subject to 2,3-didehydroalanine (Cys). Residue aspartate 161 participates in NAD(+) binding. Residues aspartate 161 and histidine 176 each coordinate Fe cation. Residue isoleucine 223 participates in NAD(+) binding. Arginine 233 is a binding site for glycine.

This sequence belongs to the THI4 family. In terms of assembly, homooctamer; tetramer of dimers. It depends on Fe(2+) as a cofactor. In terms of processing, during the catalytic reaction, a sulfide is transferred from Cys-159 to a reaction intermediate, generating a dehydroalanine residue.

It carries out the reaction [ADP-thiazole synthase]-L-cysteine + glycine + NAD(+) = [ADP-thiazole synthase]-dehydroalanine + ADP-5-ethyl-4-methylthiazole-2-carboxylate + nicotinamide + 3 H2O + 2 H(+). It participates in cofactor biosynthesis; thiamine diphosphate biosynthesis. Functionally, involved in biosynthesis of the thiamine precursor thiazole. Catalyzes the conversion of NAD and glycine to adenosine diphosphate 5-(2-hydroxyethyl)-4-methylthiazole-2-carboxylic acid (ADT), an adenylated thiazole intermediate. The reaction includes an iron-dependent sulfide transfer from a conserved cysteine residue of the protein to a thiazole intermediate. The enzyme can only undergo a single turnover, which suggests it is a suicide enzyme. This is Thiamine thiazole synthase from Aeropyrum pernix (strain ATCC 700893 / DSM 11879 / JCM 9820 / NBRC 100138 / K1).